A 450-amino-acid polypeptide reads, in one-letter code: Putative cysteine--tRNA ligase 2 (450 aa).

Residues I29–H39 carry the 'HIGH' region motif. The 'KMSKS' region motif lies at K270–S274. K273 provides a ligand contact to ATP. The disordered stretch occupies residues P372–Q392.

It belongs to the class-I aminoacyl-tRNA synthetase family. Monomer.

The protein localises to the cytoplasm. The catalysed reaction is tRNA(Cys) + L-cysteine + ATP = L-cysteinyl-tRNA(Cys) + AMP + diphosphate. This chain is Putative cysteine--tRNA ligase 2 (cysS2), found in Tropheryma whipplei (strain TW08/27) (Whipple's bacillus).